The following is a 444-amino-acid chain: UDP-N-acetylmuramoylalanine--D-glutamate ligase (444 aa).

109-115 contributes to the ATP binding site; it reads GSNGKTT.

This sequence belongs to the MurCDEF family.

The protein resides in the cytoplasm. The catalysed reaction is UDP-N-acetyl-alpha-D-muramoyl-L-alanine + D-glutamate + ATP = UDP-N-acetyl-alpha-D-muramoyl-L-alanyl-D-glutamate + ADP + phosphate + H(+). Its pathway is cell wall biogenesis; peptidoglycan biosynthesis. Functionally, cell wall formation. Catalyzes the addition of glutamate to the nucleotide precursor UDP-N-acetylmuramoyl-L-alanine (UMA). This Bacteroides fragilis (strain ATCC 25285 / DSM 2151 / CCUG 4856 / JCM 11019 / LMG 10263 / NCTC 9343 / Onslow / VPI 2553 / EN-2) protein is UDP-N-acetylmuramoylalanine--D-glutamate ligase.